The sequence spans 339 residues: BTB/POZ domain-containing protein KCTD9 (339 aa).

The 80-residue stretch at 3 to 82 (RVTLFLNGSP…PQTDARPPGG (80 aa)) folds into the KHA domain. A Phosphoserine modification is found at S11. The 73-residue stretch at 89-161 (DWLTLNVGGR…LRHGQLIVND (73 aa)) folds into the BTB domain. 3 consecutive Pentapeptide repeat domains span residues 223–247 (ANLQ…NFED), 253–292 (ANLE…NLRG), and 293–327 (ATLA…IFEE).

In terms of assembly, forms pentamers. Component of a complex mades of five KCTD9 and five CUL3 subunits.

It participates in protein modification; protein ubiquitination. In terms of biological role, substrate-specific adapter of a BCR (BTB-CUL3-RBX1) E3 ubiquitin-protein ligase complex, which mediates the ubiquitination of target proteins, leading to their degradation by the proteasome. The polypeptide is BTB/POZ domain-containing protein KCTD9 (Kctd9) (Mus musculus (Mouse)).